A 386-amino-acid chain; its full sequence is Patatin-17 (386 aa).

The signal sequence occupies residues 1-23 (MATTKSFLILIFMILATTSSTFA). Positions 32 to 229 (LSIDGGGIRG…TVADPALLSI (198 aa)) constitute a PNPLA domain. A GXGXXG motif is present at residues 36–41 (GGGIRG). The GXSXG signature appears at 75 to 79 (GTSTG). Serine 77 (nucleophile) is an active-site residue. Residue asparagine 202 is glycosylated (N-linked (GlcNAc...) asparagine). Aspartate 215 functions as the Proton acceptor in the catalytic mechanism. The DGA/G signature appears at 215–217 (DGA). Positions 321–384 (ENALTGTTTE…DRKKLRANKA (64 aa)) form a coiled coil.

The protein belongs to the patatin family.

The protein localises to the vacuole. Non-specific lipolytic acyl hydrolase (LAH), an activity which is thought to be involved in the response of tubers to pathogens. Catalyzes the non-specific hydrolysis of phospholipids, glycolipids, sulfolipids, and mono- and diacylglycerols includng p-nitrophenyl caprate. Confers resistance to southern corn rootworm (SCRW). In Solanum cardiophyllum (Heartleaf nightshade), this protein is Patatin-17.